A 184-amino-acid polypeptide reads, in one-letter code: Protein GrpE (184 aa).

Acidic residues predominate over residues 1–10 (MTDTPPENEE). The tract at residues 1–22 (MTDTPPENEEQHESNVQNENEV) is disordered.

Belongs to the GrpE family. As to quaternary structure, homodimer.

It localises to the cytoplasm. Functionally, participates actively in the response to hyperosmotic and heat shock by preventing the aggregation of stress-denatured proteins, in association with DnaK and GrpE. It is the nucleotide exchange factor for DnaK and may function as a thermosensor. Unfolded proteins bind initially to DnaJ; upon interaction with the DnaJ-bound protein, DnaK hydrolyzes its bound ATP, resulting in the formation of a stable complex. GrpE releases ADP from DnaK; ATP binding to DnaK triggers the release of the substrate protein, thus completing the reaction cycle. Several rounds of ATP-dependent interactions between DnaJ, DnaK and GrpE are required for fully efficient folding. The chain is Protein GrpE from Chlamydia pneumoniae (Chlamydophila pneumoniae).